Reading from the N-terminus, the 476-residue chain is uncharacterized protein (476 aa).

A run of 10 helical transmembrane segments spans residues 4–24 (FFSF…LFGA), 81–101 (ALAI…AAFI), 141–161 (WMGV…FSGV), 174–194 (FDFP…LAIT), 207–227 (FVPL…VMNI), 233–253 (VIWS…GAAG), 300–320 (MIGI…LILL), 351–371 (FVTL…YIYA), 391–411 (ICTF…MWQL), and 414–434 (IIMA…SPVV).

The protein belongs to the alanine or glycine:cation symporter (AGCS) (TC 2.A.25) family.

Its subcellular location is the cell inner membrane. This is an uncharacterized protein from Escherichia coli (strain K12).